Here is a 460-residue protein sequence, read N- to C-terminus: Cysteine--tRNA ligase (460 aa).

A Zn(2+)-binding site is contributed by Cys29. The 'HIGH' region signature appears at Ala31–His41. Positions 212, 237, and 241 each coordinate Zn(2+). Positions Lys268–Ser272 match the 'KMSKS' region motif. Lys271 is an ATP binding site.

Belongs to the class-I aminoacyl-tRNA synthetase family. As to quaternary structure, monomer. Zn(2+) is required as a cofactor.

Its subcellular location is the cytoplasm. It catalyses the reaction tRNA(Cys) + L-cysteine + ATP = L-cysteinyl-tRNA(Cys) + AMP + diphosphate. This Corynebacterium glutamicum (strain R) protein is Cysteine--tRNA ligase.